A 307-amino-acid chain; its full sequence is tRNA dimethylallyltransferase (307 aa).

9–16 (GATGTGKS) is an ATP binding site. 11-16 (TGTGKS) is a binding site for substrate.

The protein belongs to the IPP transferase family. In terms of assembly, monomer. Requires Mg(2+) as cofactor.

The enzyme catalyses adenosine(37) in tRNA + dimethylallyl diphosphate = N(6)-dimethylallyladenosine(37) in tRNA + diphosphate. Functionally, catalyzes the transfer of a dimethylallyl group onto the adenine at position 37 in tRNAs that read codons beginning with uridine, leading to the formation of N6-(dimethylallyl)adenosine (i(6)A). In Clavibacter sepedonicus (Clavibacter michiganensis subsp. sepedonicus), this protein is tRNA dimethylallyltransferase.